The chain runs to 699 residues: Endogenous retrovirus group K member 113 Env polyprotein (699 aa).

Residues 1–47 (MNPSEMQRKAPPRRRRHRNRAPLTHKMNKMVTSEEQMKLPSTKKAEP) are disordered. Residues 1–89 (MNPSEMQRKA…ALMIVSMVVS (89 aa)) form the signal peptide. A compositionally biased stretch (basic residues) spans 10–20 (APPRRRRHRNR). Over 90–632 (LPMPAGAAAA…NLNPVTWVKT (543 aa)) the chain is Extracellular. N-linked (GlcNAc...) asparagine glycosylation is found at N100, N128, N153, N274, N355, N372, and N461. A fusion peptide region spans residues 466-486 (FIFTLIAVIMGLIAVTATAAV). N507, N554, N566, and N585 each carry an N-linked (GlcNAc...) asparagine glycan. Residues 633–653 (IGSTTIINLILILVCLFCLLL) form a helical membrane-spanning segment. Over 654–699 (VCRCTQQLRRDSDHRERAMMTMAVLSKRKGGNVGKSKRDQIVTVSV) the chain is Cytoplasmic.

This sequence belongs to the beta type-B retroviral envelope protein family. HERV class-II K(HML-2) env subfamily. As to quaternary structure, the surface (SU) and transmembrane (TM) proteins form a heterodimer. SU and TM are attached by noncovalent interactions or by a labile interchain disulfide bond. Specific enzymatic cleavages in vivo yield the mature SU and TM proteins.

It is found in the cell membrane. The protein localises to the virion. Retroviral envelope proteins mediate receptor recognition and membrane fusion during early infection. Endogenous envelope proteins may have kept, lost or modified their original function during evolution. This endogenous envelope protein has lost its original fusogenic properties. In terms of biological role, SU mediates receptor recognition. Functionally, TM anchors the envelope heterodimer to the viral membrane through one transmembrane domain. The other hydrophobic domain, called fusion peptide, mediates fusion of the viral membrane with the target cell membrane. This is Endogenous retrovirus group K member 113 Env polyprotein (HERVK_113) from Homo sapiens (Human).